Consider the following 164-residue polypeptide: MARGLGEGDPQENDESNGDPPHNTDERSDGDDGPTPYLPVTLLNAGPFGPYNPYCLLGHPVQESGCPGRPTALSGAVGLPTPSGSRSSSHLSTPVGLSAVRVSGCGGAGSEEHVYAEVGSLHSEHEQEGDKCTDCSVTILLLLVIIVLLLIIIGLMLVIMFKKM.

The interval 1–41 is disordered; it reads MARGLGEGDPQENDESNGDPPHNTDERSDGDDGPTPYLPVT. A zinc finger spans residues 122-135; the sequence is HSEHEQEGDKCTDC. Residues 136-161 traverse the membrane as a helical segment; sequence SVTILLLLVIIVLLLIIIGLMLVIMF.

The protein resides in the membrane. In terms of biological role, stp is required for transformation, but it is not required for replication of the virus. The T-lymphocyte is the target cell for transformation by herpesvirus saimiri. This Saimiriine herpesvirus 2 (strain 11) (SaHV-2) protein is Transforming protein STP (1).